A 100-amino-acid polypeptide reads, in one-letter code: NAD(P)H-quinone oxidoreductase subunit 4L, chloroplastic (100 aa).

3 consecutive transmembrane segments (helical) span residues Met1–Ile21, Ile27–Phe47, and Phe61–Phe81.

Belongs to the complex I subunit 4L family. As to quaternary structure, NDH is composed of at least 16 different subunits, 5 of which are encoded in the nucleus.

The protein resides in the plastid. The protein localises to the chloroplast thylakoid membrane. The catalysed reaction is a plastoquinone + NADH + (n+1) H(+)(in) = a plastoquinol + NAD(+) + n H(+)(out). It carries out the reaction a plastoquinone + NADPH + (n+1) H(+)(in) = a plastoquinol + NADP(+) + n H(+)(out). In terms of biological role, NDH shuttles electrons from NAD(P)H:plastoquinone, via FMN and iron-sulfur (Fe-S) centers, to quinones in the photosynthetic chain and possibly in a chloroplast respiratory chain. The immediate electron acceptor for the enzyme in this species is believed to be plastoquinone. Couples the redox reaction to proton translocation, and thus conserves the redox energy in a proton gradient. The polypeptide is NAD(P)H-quinone oxidoreductase subunit 4L, chloroplastic (Chaetosphaeridium globosum (Charophycean green alga)).